We begin with the raw amino-acid sequence, 1076 residues long: Isoleucine--tRNA ligase (1076 aa).

The 'HIGH' region motif lies at 47–57; it reads PYTTGQIHLGT. The 'KMSKS' region signature appears at 591-595; it reads KMSKS. Lysine 594 is an ATP binding site.

It belongs to the class-I aminoacyl-tRNA synthetase family. IleS type 2 subfamily. As to quaternary structure, monomer. Zn(2+) serves as cofactor.

Its subcellular location is the cytoplasm. It catalyses the reaction tRNA(Ile) + L-isoleucine + ATP = L-isoleucyl-tRNA(Ile) + AMP + diphosphate. In terms of biological role, catalyzes the attachment of isoleucine to tRNA(Ile). As IleRS can inadvertently accommodate and process structurally similar amino acids such as valine, to avoid such errors it has two additional distinct tRNA(Ile)-dependent editing activities. One activity is designated as 'pretransfer' editing and involves the hydrolysis of activated Val-AMP. The other activity is designated 'posttransfer' editing and involves deacylation of mischarged Val-tRNA(Ile). This chain is Isoleucine--tRNA ligase, found in Methanoregula boonei (strain DSM 21154 / JCM 14090 / 6A8).